A 336-amino-acid chain; its full sequence is uncharacterized protein (336 aa).

This sequence belongs to the GppA/Ppx family.

This is an uncharacterized protein from Streptomyces coelicolor (strain ATCC BAA-471 / A3(2) / M145).